Reading from the N-terminus, the 524-residue chain is Unconventional prefoldin RPB5 interactor (524 aa).

Disordered regions lie at residues 1-20 (MEAP…LRAP), 284-320 (SVNG…EDNS), and 335-373 (VRIN…ELPM). The segment covering 296 to 307 (DDGDNNDDGGDS) has biased composition (acidic residues). The residue at position 361 (Ser-361) is a Phosphoserine; by RPS6KB1. A Phosphoserine modification is found at Ser-431.

Belongs to the RNA polymerase II subunit 5-mediating protein family. In terms of assembly, homodimer. Component of the PAQosome complex which is responsible for the biogenesis of several protein complexes and which consists of R2TP complex members RUVBL1, RUVBL2, RPAP3 and PIH1D1, URI complex members PFDN2, PFDN6, PDRG1, UXT and URI1 as well as ASDURF, POLR2E and DNAAF10/WDR92. Interacts with POLR2E/RPB5, RUVBL2 and RUVBL1. Interacts with PFDN2, PFDN4 and STAP1; the interactions are phosphorylation-dependent and occur in a growth-dependent manner in the mitochondrion. Interacts with UXT. Interacts with PPP1CC; the interaction is phosphorylation-dependent and occurs in a growth factor-dependent manner. Interacts (via the middle C-terminal region) with GTF2F1 and GTF2F2. Interacts with DMAP1. Interacts with TSC1 and TSC2. Interacts with PRPF8 and EFTUD2 in a ZNHIT2-dependent manner. In terms of processing, phosphorylated. Phosphorylation occurs essentially on serine residues. Phosphorylation occurs in response to androgen treatment in prostate cancer cells in a mTOR-dependent manner. Phosphorylated; hyperhosphorylated in mitochondria in a mTORC-dependent signaling pathway. Phosphorylated at Ser-361 by RPS6KB1 in a growth factor- and rapamycin-dependent manner. S6K1-mediated mitochondrial phosphorylation at Ser-361 disrupts the URI1-PPP1CC complex in the mitochondrion, relieves PPP1CC phosphatase inhibition activity and hence engages a negative feedback diminishing RPS6KB1 kinase activity, preventing sustained S6K1-dependent signaling.

Its subcellular location is the nucleus. It is found in the cytoplasm. The protein localises to the mitochondrion. The protein resides in the cell projection. It localises to the dendrite. In terms of biological role, involved in gene transcription regulation. Acts as a transcriptional repressor in concert with the corepressor UXT to regulate androgen receptor (AR) transcription. May act as a tumor suppressor to repress AR-mediated gene transcription and to inhibit anchorage-independent growth in prostate cancer cells. Required for cell survival in ovarian cancer cells. Together with UXT, associates with chromatin to the NKX3-1 promoter region. Plays a central role in maintaining S6K1 signaling and BAD phosphorylation under normal growth conditions thereby protecting cells from potential deleterious effects of sustained S6K1 signaling. The URI1-PPP1CC complex acts as a central component of a negative feedback mechanism that counteracts excessive S6K1 survival signaling to BAD in response to growth factors. Mediates inhibition of PPP1CC phosphatase activity in mitochondria. Coordinates the regulation of nutrient-sensitive gene expression availability in a mTOR-dependent manner. Seems to be a scaffolding protein able to assemble a prefoldin-like complex that contains PFDs and proteins with roles in transcription and ubiquitination. This is Unconventional prefoldin RPB5 interactor (URI1) from Bos taurus (Bovine).